A 198-amino-acid polypeptide reads, in one-letter code: T-cell surface glycoprotein CD3 epsilon chain (198 aa).

Positions 1 to 21 are cleaved as a signal peptide; it reads MQSGTRWRVLGLCLLSIGVWG. Topologically, residues 22–117 are extracellular; sequence QDGNEEMGSI…RVCENCMEMD (96 aa). In terms of domain architecture, Ig-like spans 37–107; the sequence is QVSISGTTVI…DASHHLYLKA (71 aa). A disulfide bond links Cys49 and Cys89. A helical transmembrane segment spans residues 118-138; sequence VMAVATIVIVDICITLGLLLL. Over 139-198 the chain is Cytoplasmic; sequence VYYWSKNRKAKAKPVTRGAGAGGRQRGQNKERPPPVPNPDYEPIRKGQQDLYSGLNQRRI. Residues 152-198 are disordered; it reads PVTRGAGAGGRQRGQNKERPPPVPNPDYEPIRKGQQDLYSGLNQRRI. Positions 166 to 183 are NUMB-binding region; sequence QNKERPPPVPNPDYEPIR. Residues 169 to 196 enclose the ITAM domain; the sequence is ERPPPVPNPDYEPIRKGQQDLYSGLNQR. Positions 170–177 are proline-rich sequence; sequence RPPPVPNP. Phosphotyrosine is present on residues Tyr179 and Tyr190. The span at 188–198 shows a compositional bias: polar residues; it reads DLYSGLNQRRI.

In terms of assembly, the TCR-CD3 complex is composed of a CD3D/CD3E and a CD3G/CD3E heterodimers that preferentially associate with TCRalpha and TCRbeta, respectively, to form TCRalpha/CD3E/CD3G and TCRbeta/CD3G/CD3E trimers. In turn, the hexamer interacts with CD3Z homodimer to form the TCR-CD3 complex. Alternatively, TCRalpha and TCRbeta can be replaced by TCRgamma and TCRdelta. Interacts with CD6. Interacts (via Proline-rich sequence) with NCK1; the interaction is ligand dependent but independent of tyrosine kinase activation. In terms of processing, phosphorylated on Tyr residues after T-cell receptor triggering by LCK in association with CD4/CD8.

The protein resides in the cell membrane. In terms of biological role, part of the TCR-CD3 complex present on T-lymphocyte cell surface that plays an essential role in adaptive immune response. When antigen presenting cells (APCs) activate T-cell receptor (TCR), TCR-mediated signals are transmitted across the cell membrane by the CD3 chains CD3D, CD3E, CD3G and CD3Z. All CD3 chains contain immunoreceptor tyrosine-based activation motifs (ITAMs) in their cytoplasmic domain. Upon TCR engagement, these motifs become phosphorylated by Src family protein tyrosine kinases LCK and FYN, resulting in the activation of downstream signaling pathways. In addition of this role of signal transduction in T-cell activation, CD3E plays an essential role in correct T-cell development. Also participates in internalization and cell surface down-regulation of TCR-CD3 complexes via endocytosis sequences present in CD3E cytosolic region. In addition to its role as a TCR coreceptor, it serves as a receptor for ITPRIPL1. Ligand recognition inhibits T-cell activation by promoting interaction with NCK1, which prevents CD3E-ZAP70 interaction and blocks the ERK-NFkB signaling cascade and calcium influx. This is T-cell surface glycoprotein CD3 epsilon chain (CD3E) from Macaca fascicularis (Crab-eating macaque).